The sequence spans 534 residues: MEDNCTDMFNGCSKFDISIQTQVALLALIDNTGYTMVQVNGQRKFGGPPPGWEGPPPPRGCEVFVGKIPRDMYEDKLVPLFARAGKIYEFRLMMEFSGENRGYAFVMYTNKEEALLAIRMLNNYEICQGKFIGVCVSLDNCRLFIGSIPQEKRKEEILEEMKKVTEGVMDVIVYPSATDKTKNRGFAFVMYESHRAAAMARRKLIPGPFQLWGHTIKVAWASPEKEVDEETMQKVKVLYVRNLMMSTTEETIKAEFNRYKPGVVERVKKIRDYAFVHFFRRDYAIAAMSVMNGRLIDGARIEVTLAKPVNKEAAWRQNGNGHMNANSECLLNFANKEGSQKALDMCSNVPAYLNNPNSPTFLEPETCTYPCIPGTKLTPINLYSLKIHHFHSAVMHLEYFCYKNNWSFPEYYLYSTTGQDGKMLLAYKVILPAITGNTNSYFMPDKLCSFVEDAKELAAQFTLMHLDYSYHPTSGKNISLPSTAATSGTSGVLPYTPKPYSYSSYPSSPNVSLTNGGSVGKQLYVSNQASYFSG.

RRM domains are found at residues 61–139 (CEVF…VSLD), 141–223 (CRLF…WASP), and 236–308 (KVLY…LAKP).

Its subcellular location is the cytoplasm. Essential for male and female fertility, playing a crucial role in regulating germ cell development by ensuring the proper progression of meiosis prophase I. The polypeptide is Probable RNA-binding protein 46 (rbm46) (Xenopus tropicalis (Western clawed frog)).